The chain runs to 217 residues: GSWLVMRLMEPGYMVRATVRDPENLKKVSPLLELPGAKSKLSIWKADLGEEGSFDEAIKGCTGVFHVATPMDFESKDPENEMIKPTIKGVLDIMKACLKAKTVRRLIYTSSAGTLNVTEDQKPLWDESCWSDVEFCRRVKMTGWMYFVSKTLAEQEAWKFAKEHKMDVITIIPPLVVGPFLIPTMPPSLITALSPITGNEAHYSIIKQGQYVHLDDL.

Lys-27 and Tyr-146 together coordinate NADP(+).

Belongs to the NAD(P)-dependent epimerase/dehydratase family. Dihydroflavonol-4-reductase subfamily.

The catalysed reaction is a (2R,3S,4S)-leucoanthocyanidin + NADP(+) = a (2R,3R)-dihydroflavonol + NADPH + H(+). It catalyses the reaction (2S)-flavan-4-ol + NADP(+) = (2S)-flavanone + NADPH + H(+). It functions in the pathway pigment biosynthesis; anthocyanin biosynthesis. Functionally, bifunctional enzyme involved in flavonoid metabolism. The protein is Dihydroflavonol 4-reductase (DFR1) of Medicago sativa (Alfalfa).